The sequence spans 493 residues: Transmembrane and coiled-coil domain-containing protein 6 (493 aa).

A coiled-coil region spans residues 15–84; sequence GVEELRRRRR…QRGTEEKERE (70 aa). 2 helical membrane passes run 338-358 and 386-406; these read VVAALFILLQFFFQKQPSLLP and PLLQLLPVSNVVSVMVLTVLC.

It localises to the membrane. This chain is Transmembrane and coiled-coil domain-containing protein 6 (TMCO6), found in Homo sapiens (Human).